An 86-amino-acid chain; its full sequence is Large ribosomal subunit protein bL27 (86 aa).

The segment at methionine 1–serine 26 is disordered.

The protein belongs to the bacterial ribosomal protein bL27 family.

The chain is Large ribosomal subunit protein bL27 from Rickettsia prowazekii (strain Madrid E).